Consider the following 162-residue polypeptide: Putative ankyrin repeat protein RBE_0151 (162 aa).

3 ANK repeats span residues E49–I77, K81–P110, and Y114–K145.

The sequence is that of Putative ankyrin repeat protein RBE_0151 from Rickettsia bellii (strain RML369-C).